A 380-amino-acid chain; its full sequence is Fibromodulin (380 aa).

An N-terminal signal peptide occupies residues 1 to 18 (MRWANILLVAGLCRASLG). Positions 71-109 (EAQQASSWQCPQECDCPPNFSSAMYCDTRNLRYLPFVPT) constitute an LRRNT domain. An N-linked (GlcNAc...) asparagine glycan is attached at asparagine 89. LRR repeat units lie at residues 110 to 131 (RMKYVYFQNNQITAIQEGAFDN), 134 to 147 (ELEWLALHNNQISS), 160 to 180 (NLERLYMNNNNLTKMPSPLPR), 181 to 202 (SLRELHLSYNQISKVPSNALEG), 205 to 227 (NLTALYLSHNYIFEMGASLKGLK), 228 to 248 (SLILADLSYNHLRKVPDGLPM), 249 to 270 (ALEQLYLEYNYINAIPDDYFKV), and 273 to 293 (KLLYVRMSHNSLTNQGLSTNT). N-linked (GlcNAc...) (keratan sulfate) asparagine glycosylation occurs at asparagine 131. N-linked (GlcNAc...) (keratan sulfate) asparagine glycosylation is present at asparagine 170. The N-linked (GlcNAc...) (keratan sulfate) asparagine glycan is linked to asparagine 205. The N-linked (GlcNAc...) (keratan sulfate) asparagine glycan is linked to asparagine 295. LRR repeat units follow at residues 298-317 (SILELDLSYNRLQKIPRVST) and 318-339 (NLENLYLQGNQINEFSISSFCT). Cysteine 338 and cysteine 371 are oxidised to a cystine. A glycan (N-linked (GlcNAc...) asparagine) is linked at asparagine 345. The stretch at 348–371 (RLQVLRLDGNEIKRNAMPPDAPLC) is one LRR 11 repeat.

It belongs to the small leucine-rich proteoglycan (SLRP) family. SLRP class II subfamily. As to quaternary structure, binds to type I and type II collagen. In terms of processing, binds keratan sulfate chains.

It is found in the secreted. The protein localises to the extracellular space. Its subcellular location is the extracellular matrix. Its function is as follows. Affects the rate of fibrils formation. May have a primary role in collagen fibrillogenesis. This is Fibromodulin (FMOD) from Gallus gallus (Chicken).